The sequence spans 295 residues: UDP-N-acetylenolpyruvoylglucosamine reductase (295 aa).

Residues 23–188 (KVGGPADFLA…ISAKFALKPG (166 aa)) form the FAD-binding PCMH-type domain. Arg167 is a catalytic residue. Residue Ser217 is the Proton donor of the active site. The active site involves Glu287.

The protein belongs to the MurB family. FAD is required as a cofactor.

The protein localises to the cytoplasm. The catalysed reaction is UDP-N-acetyl-alpha-D-muramate + NADP(+) = UDP-N-acetyl-3-O-(1-carboxyvinyl)-alpha-D-glucosamine + NADPH + H(+). The protein operates within cell wall biogenesis; peptidoglycan biosynthesis. In terms of biological role, cell wall formation. The polypeptide is UDP-N-acetylenolpyruvoylglucosamine reductase (Streptococcus pyogenes serotype M1).